The primary structure comprises 1294 residues: von Willebrand factor A domain-containing protein 3B (1294 aa).

The region spanning 508–684 (CIYILIDTSH…EDLTLLVKEM (177 aa)) is the VWFA domain. Disordered regions lie at residues 732–754 (CAKP…KGPW), 778–803 (RSQM…SSRR), 1012–1036 (APGE…DPLK), and 1193–1247 (DTQD…PRTA). The segment covering 738–748 (DVDSTQTSSLN) has biased composition (polar residues). Over residues 778-787 (RSQMSSLRSS) the composition is skewed to low complexity. Residues 1193–1202 (DTQDSREPRR) show a composition bias toward basic and acidic residues. A compositionally biased stretch (basic residues) spans 1203 to 1212 (EKPRRKKRPA). Positions 1213–1236 (KQPLQQAAPSDSDGSSHGISSHGS) are enriched in low complexity.

Its subcellular location is the cytoplasm. This Homo sapiens (Human) protein is von Willebrand factor A domain-containing protein 3B (VWA3B).